Reading from the N-terminus, the 393-residue chain is Pyrimidine monooxygenase RutA (393 aa).

Residues I79–K80, N145, E154, R170–Y171, and S220 contribute to the FMN site.

The protein belongs to the NtaA/SnaA/DszA monooxygenase family. RutA subfamily.

It carries out the reaction uracil + FMNH2 + NADH + O2 = (Z)-3-ureidoacrylate + FMN + NAD(+) + H2O + H(+). The enzyme catalyses thymine + FMNH2 + NADH + O2 = (Z)-2-methylureidoacrylate + FMN + NAD(+) + H2O + H(+). Catalyzes the pyrimidine ring opening between N-3 and C-4 by an unusual flavin hydroperoxide-catalyzed mechanism, adding oxygen atoms in the process to yield ureidoacrylate peracid, that immediately reacts with FMN forming ureidoacrylate and FMN-N(5)-oxide. The FMN-N(5)-oxide reacts spontaneously with NADH to produce FMN. Requires the flavin reductase RutF to regenerate FMN in vivo. The protein is Pyrimidine monooxygenase RutA of Escherichia coli O9:H4 (strain HS).